The following is a 154-amino-acid chain: Myoglobin (154 aa).

Positions 2–148 constitute a Globin domain; the sequence is GLSDGEWQLV…FRNDMATKYK (147 aa). Serine 4 bears the Phosphoserine mark. Histidine 65 contacts nitrite. Residue histidine 65 participates in O2 binding. Histidine 94 is a heme b binding site.

The protein belongs to the globin family. Monomeric.

It is found in the cytoplasm. The protein localises to the sarcoplasm. It carries out the reaction Fe(III)-heme b-[protein] + nitric oxide + H2O = Fe(II)-heme b-[protein] + nitrite + 2 H(+). The enzyme catalyses H2O2 + AH2 = A + 2 H2O. In terms of biological role, monomeric heme protein which primary function is to store oxygen and facilitate its diffusion within muscle tissues. Reversibly binds oxygen through a pentacoordinated heme iron and enables its timely and efficient release as needed during periods of heightened demand. Depending on the oxidative conditions of tissues and cells, and in addition to its ability to bind oxygen, it also has a nitrite reductase activity whereby it regulates the production of bioactive nitric oxide. Under stress conditions, like hypoxia and anoxia, it also protects cells against reactive oxygen species thanks to its pseudoperoxidase activity. This is Myoglobin (MB) from Tachyglossus aculeatus aculeatus (Southeast Australian short-beaked echidna).